A 472-amino-acid chain; its full sequence is Cannabinoid receptor 1 (472 aa).

Topologically, residues 1-116 (MKSILDGLAD…CFMILNPSQQ (116 aa)) are extracellular. Residues 2–23 (KSILDGLADTTFRTITTDLLYV) are required for mitochondrial localization. N-linked (GlcNAc...) asparagine glycans are attached at residues Asn77 and Asn83. Residues 117–142 (LAIAVLSLTLGTFTVLENLLVLCVIL) traverse the membrane as a helical segment. Over 143–154 (HSRSLRCRPSYH) the chain is Cytoplasmic. Residues 155–175 (FIGSLAVADLLGSVIFVYSFV) traverse the membrane as a helical segment. Over 176-187 (DFHVFHRKDSPN) the chain is Extracellular. Residues 188–212 (VFLFKLGGVTASFTASVGSLFLTAI) form a helical membrane-spanning segment. Topologically, residues 213–232 (DRYISIHRPLAYKKIVTRPK) are cytoplasmic. Residues 233-255 (AVVAFCLMWTIAIVIAVLPLLGW) form a helical membrane-spanning segment. Residues 256-273 (NCKKLQSVCSDIFPLIDE) lie on the Extracellular side of the membrane. A helical transmembrane segment spans residues 274–299 (TYLMFWIGVTSVLLLFIVYAYMYILW). The Cytoplasmic portion of the chain corresponds to 300–344 (KAHIHAVRMIQRGTQKSIIIHTSEDGKVQVTRPDQARMDIRLAKT). Residues 345–365 (LVLILVVLIICWGPLLAIMVY) form a helical membrane-spanning segment. Topologically, residues 366–377 (DVFGKMNKLIKT) are extracellular. Residues 378-399 (VFAFCSMLCLLNSTVNPIIYAL) form a helical membrane-spanning segment. Residues 400–472 (RSKDLRHAFR…VSTNTSAKAL (73 aa)) lie on the Cytoplasmic side of the membrane. Residue Cys415 is the site of S-palmitoyl cysteine attachment. A phosphoserine mark is found at Ser425 and Ser429.

It belongs to the G-protein coupled receptor 1 family. As to quaternary structure, interacts (via C-terminus) with CNRIP1; this interaction attenuates constitutive, but not agonist-dependent, inhibition of voltage-gated Ca(2+) channels in neurons. Associates with G protein alpha subunits, including G(i) alpha-1/GNAI1, G(i) alpha-3/GNAI3 and G(o)-alpha/GNAO1; palmitoylation is important for interaction with GNAI3 and GNAO1. In terms of processing, palmitoylation at Cys-415 is important for recruitment at plasma membrane and lipid rafts and association with G protein alpha subunits. Expressed in cerebral arterial muscle cells and cerebral cortex (at protein level).

The protein resides in the cell membrane. It localises to the membrane raft. The protein localises to the mitochondrion outer membrane. It is found in the cell projection. Its subcellular location is the axon. The protein resides in the presynapse. With respect to regulation, hemopressin, a peptide derived from hemoglobin subunit alpha (HBA1 and/or HBA2), acts as an antagonist peptide: hemopressin-binding efficiently blocks cannabinoid receptor CNR1 and subsequent signaling. In terms of biological role, G-protein coupled receptor for endogenous cannabinoids (eCBs), including N-arachidonoylethanolamide (also called anandamide or AEA) and 2-arachidonoylglycerol (2-AG), as well as phytocannabinoids, such as delta(9)-tetrahydrocannabinol (THC). Mediates many cannabinoid-induced effects, acting, among others, on food intake, memory loss, gastrointestinal motility, catalepsy, ambulatory activity, anxiety, chronic pain. Signaling typically involves reduction in cyclic AMP. In the hypothalamus, may have a dual effect on mitochondrial respiration depending upon the agonist dose and possibly upon the cell type. Increases respiration at low doses, while decreases respiration at high doses. At high doses, CNR1 signal transduction involves G-protein alpha-i protein activation and subsequent inhibition of mitochondrial soluble adenylate cyclase, decrease in cyclic AMP concentration, inhibition of protein kinase A (PKA)-dependent phosphorylation of specific subunits of the mitochondrial electron transport system, including NDUFS2. In the hypothalamus, inhibits leptin-induced reactive oxygen species (ROS) formation and mediates cannabinoid-induced increase in SREBF1 and FASN gene expression. In response to cannabinoids, drives the release of orexigenic beta-endorphin, not that of melanocyte-stimulating hormone alpha/alpha-MSH, from hypothalamic POMC neurons, hence promoting food intake. In the hippocampus, regulates cellular respiration and energy production in response to cannabinoids. Involved in cannabinoid-dependent depolarization-induced suppression of inhibition (DSI), a process in which depolarization of CA1 postsynaptic pyramidal neurons mobilizes eCBs, which retrogradely activate presynaptic CB1 receptors, transiently decreasing GABAergic inhibitory neurotransmission. Also reduces excitatory synaptic transmission. In superior cervical ganglions and cerebral vascular smooth muscle cells, inhibits voltage-gated Ca(2+) channels in a constitutive, as well as agonist-dependent manner. In cerebral vascular smooth muscle cells, inhibition of voltage-gated Ca(2+) channels leads to vasodilation and decrease in vascular tone. Induces leptin production in adipocytes and reduces LRP2-mediated leptin clearance in the kidney, hence participating in hyperleptinemia. In adipose tissue, CNR1 signaling leads to increased expression of SREBF1, ACACA and FASN genes. In the liver, activation by endocannabinoids leads to increased de novo lipogenesis and reduced fatty acid catabolism, associated with increased expression of SREBF1/SREBP-1, GCK, ACACA, ACACB and FASN genes. May also affect de novo cholesterol synthesis and HDL-cholesteryl ether uptake. Peripherally modulates energy metabolism. In high carbohydrate diet-induced obesity, may decrease the expression of mitochondrial dihydrolipoyl dehydrogenase/DLD in striated muscles, as well as that of selected glucose/ pyruvate metabolic enzymes, hence affecting energy expenditure through mitochondrial metabolism. In response to cannabinoid anandamide, elicits a pro-inflammatory response in macrophages, which involves NLRP3 inflammasome activation and IL1B and IL18 secretion. In macrophages infiltrating pancreatic islets, this process may participate in the progression of type-2 diabetes and associated loss of pancreatic beta-cells. The polypeptide is Cannabinoid receptor 1 (CNR1) (Felis catus (Cat)).